The primary structure comprises 486 residues: Protein nucleotidyltransferase YdiU (486 aa).

Positions 90, 92, 93, 113, 125, 126, 176, and 183 each coordinate ATP. Asp-252 acts as the Proton acceptor in catalysis. Mg(2+)-binding residues include Asn-253 and Asp-262. Position 262 (Asp-262) interacts with ATP.

It belongs to the SELO family. Mg(2+) serves as cofactor. Requires Mn(2+) as cofactor.

The enzyme catalyses L-seryl-[protein] + ATP = 3-O-(5'-adenylyl)-L-seryl-[protein] + diphosphate. It carries out the reaction L-threonyl-[protein] + ATP = 3-O-(5'-adenylyl)-L-threonyl-[protein] + diphosphate. It catalyses the reaction L-tyrosyl-[protein] + ATP = O-(5'-adenylyl)-L-tyrosyl-[protein] + diphosphate. The catalysed reaction is L-histidyl-[protein] + UTP = N(tele)-(5'-uridylyl)-L-histidyl-[protein] + diphosphate. The enzyme catalyses L-seryl-[protein] + UTP = O-(5'-uridylyl)-L-seryl-[protein] + diphosphate. It carries out the reaction L-tyrosyl-[protein] + UTP = O-(5'-uridylyl)-L-tyrosyl-[protein] + diphosphate. Its function is as follows. Nucleotidyltransferase involved in the post-translational modification of proteins. It can catalyze the addition of adenosine monophosphate (AMP) or uridine monophosphate (UMP) to a protein, resulting in modifications known as AMPylation and UMPylation. This chain is Protein nucleotidyltransferase YdiU, found in Pseudomonas entomophila (strain L48).